A 287-amino-acid polypeptide reads, in one-letter code: Coatomer subunit epsilon-1 (287 aa).

Belongs to the COPE family. In terms of assembly, oligomeric complex that consists of at least the alpha, beta, beta', gamma, delta, epsilon and zeta subunits.

It localises to the cytoplasm. The protein resides in the golgi apparatus membrane. Its subcellular location is the cytoplasmic vesicle. It is found in the COPI-coated vesicle membrane. In terms of biological role, the coatomer is a cytosolic protein complex that binds to dilysine motifs and reversibly associates with Golgi non-clathrin-coated vesicles, which further mediate biosynthetic protein transport from the ER, via the Golgi up to the trans Golgi network. The coatomer complex is required for budding from Golgi membranes, and is essential for the retrograde Golgi-to-ER transport of dilysine-tagged proteins. The polypeptide is Coatomer subunit epsilon-1 (COPE1) (Oryza sativa subsp. japonica (Rice)).